The sequence spans 860 residues: Leucine--tRNA ligase (860 aa).

A 'HIGH' region motif is present at residues 42–52; the sequence is PYPSGRLHMGH. The 'KMSKS' region signature appears at 619-623; the sequence is KMSKS. An ATP-binding site is contributed by K622.

The protein belongs to the class-I aminoacyl-tRNA synthetase family.

The protein resides in the cytoplasm. It catalyses the reaction tRNA(Leu) + L-leucine + ATP = L-leucyl-tRNA(Leu) + AMP + diphosphate. In Escherichia coli O7:K1 (strain IAI39 / ExPEC), this protein is Leucine--tRNA ligase.